The following is a 386-amino-acid chain: Synaptotagmin-5 (386 aa).

Over residues 1–16 (MFPEPPTLGSPAPKTP) the composition is skewed to pro residues. A disordered region spans residues 1–21 (MFPEPPTLGSPAPKTPPDSSR). Residues 1–24 (MFPEPPTLGSPAPKTPPDSSRIRQ) are Vesicular-facing. The chain crosses the membrane as a helical span at residues 25 to 45 (GAVPAWVLATIVLGSGLLVFS). At 46 to 386 (SCFCLYRKRC…PDRARPIPAP (341 aa)) the chain is on the cytoplasmic side. C2 domains are found at residues 108–227 (QLGR…QAWR) and 239–372 (KLGD…AQWH). Ca(2+)-binding residues include Leu138, Asp139, Asp145, Asp197, Phe198, Asp199, Ser202, Asp205, Asp270, Asp276, Asp330, and Asp332.

Belongs to the synaptotagmin family. Homodimer. Interacts with both alpha- and beta-tubulin. It depends on Ca(2+) as a cofactor.

It localises to the cytoplasmic vesicle. The protein resides in the secretory vesicle. It is found in the synaptic vesicle membrane. Its subcellular location is the recycling endosome membrane. Its function is as follows. May be involved in Ca(2+)-dependent exocytosis of secretory vesicles through Ca(2+) and phospholipid binding to the C2 domain or may serve as Ca(2+) sensors in the process of vesicular trafficking and exocytosis. Regulates the Ca(2+)-dependent secretion of norepinephrine in PC12 cells. Required for export from the endocytic recycling compartment to the cell surface. In Mus musculus (Mouse), this protein is Synaptotagmin-5 (Syt5).